Consider the following 572-residue polypeptide: Proline--tRNA ligase (572 aa).

The protein belongs to the class-II aminoacyl-tRNA synthetase family. ProS type 1 subfamily. In terms of assembly, homodimer.

Its subcellular location is the cytoplasm. It carries out the reaction tRNA(Pro) + L-proline + ATP = L-prolyl-tRNA(Pro) + AMP + diphosphate. Catalyzes the attachment of proline to tRNA(Pro) in a two-step reaction: proline is first activated by ATP to form Pro-AMP and then transferred to the acceptor end of tRNA(Pro). As ProRS can inadvertently accommodate and process non-cognate amino acids such as alanine and cysteine, to avoid such errors it has two additional distinct editing activities against alanine. One activity is designated as 'pretransfer' editing and involves the tRNA(Pro)-independent hydrolysis of activated Ala-AMP. The other activity is designated 'posttransfer' editing and involves deacylation of mischarged Ala-tRNA(Pro). The misacylated Cys-tRNA(Pro) is not edited by ProRS. This chain is Proline--tRNA ligase, found in Escherichia coli (strain K12 / MC4100 / BW2952).